The sequence spans 543 residues: Acrosin-binding protein (543 aa).

The N-terminal stretch at 1 to 25 (MRKPAAGFLPSLLKVLLLPLAPAAA) is a signal peptide. Residues 26–106 (QDSTQASTPG…ASWFESFCQF (81 aa)) are pro-ACR binding. The propeptide at 26–273 (QDSTQASTPG…NPSSFAPRVR (248 aa)) is removed in mature form. The disordered stretch occupies residues 185-272 (SLGGQEQAPE…SNPSSFAPRV (88 aa)). Residues 192–220 (APEHKQEQGVEHRQEPTQEHKQEEGQKQE) show a composition bias toward basic and acidic residues. Residues 221–231 (EQEEEQEEEGK) are compositionally biased toward acidic residues. Positions 232–243 (QEEGQGTKEGRE) are enriched in basic and acidic residues. The segment at 319 to 427 (LPHTEALLVL…NQVGSPESGR (109 aa)) is pro-ACR binding.

As to quaternary structure, binds proacrosin (pro-ACR). Does not bind the mature form of ACR. Post-translationally, phosphorylated on Tyr residues in capacitated sperm. In terms of processing, the N-terminus is blocked. Synthesized as a 60-kDa precursor, the 32-kDa mature form is post-translationally produced by the removal of the N-terminal half of the precursor during sperm maturation in the testis and/or epididymis. In terms of tissue distribution, expression restricted to testis in normal tissue. Expressed in a wide spectrum of cancers, including bladder, breast, liver, lung and colon cancers.

It is found in the secreted. The protein resides in the cytoplasmic vesicle. The protein localises to the secretory vesicle. Its subcellular location is the acrosome. Functionally, acrosomal protein that maintains proacrosin (pro-ACR) as an enzymatically inactive zymogen in the acrosome. Involved also in the acrosome formation. This is Acrosin-binding protein from Homo sapiens (Human).